Here is a 634-residue protein sequence, read N- to C-terminus: Proline and serine-rich protein 3 (634 aa).

Disordered regions lie at residues 1 to 69 (MFPK…LIDN), 81 to 142 (FRQA…TSLA), 185 to 242 (DASS…ATLK), 368 to 455 (VPPT…FEGP), and 472 to 534 (FPDS…TAPK). The span at 15 to 24 (RTGATRSQRP) shows a compositional bias: polar residues. 3 stretches are compositionally biased toward low complexity: residues 40 to 56 (ESWP…STTE), 128 to 140 (VTGP…SSTS), and 185 to 202 (DASS…SPSS). Residues 203–215 (VTFNPDSNKSSNP) show a composition bias toward polar residues. The segment covering 368 to 377 (VPPTSTSTTP) has biased composition (low complexity). Residues 378–399 (APTPTPQVCIPGPPTSAPPPCA) show a composition bias toward pro residues. Residues 436-448 (VSTSSHQKTTVPD) show a composition bias toward polar residues. The segment covering 503–515 (PESRRGSKTESRK) has biased composition (basic and acidic residues). Position 588 is a phosphoserine (Ser-588).

The protein localises to the cytoplasm. The protein resides in the cytoskeleton. It localises to the microtubule organizing center. It is found in the centrosome. In Mus musculus (Mouse), this protein is Proline and serine-rich protein 3 (Proser3).